An 847-amino-acid polypeptide reads, in one-letter code: DNA mismatch repair protein MutS (847 aa).

Residue 603–610 (GPNMSGKS) participates in ATP binding.

This sequence belongs to the DNA mismatch repair MutS family.

This protein is involved in the repair of mismatches in DNA. It is possible that it carries out the mismatch recognition step. This protein has a weak ATPase activity. In Streptococcus suis (strain 98HAH33), this protein is DNA mismatch repair protein MutS.